The sequence spans 206 residues: 2,3-bisphosphoglycerate-dependent phosphoglycerate mutase (206 aa).

Residues 9 to 16, 22 to 23, R61, 88 to 91, K99, 115 to 116, and 159 to 160 contribute to the substrate site; these read RHGQSEWN, TG, ERDY, RR, and GN. H10 serves as the catalytic Tele-phosphohistidine intermediate. Residue E88 is the Proton donor/acceptor of the active site.

The protein belongs to the phosphoglycerate mutase family. BPG-dependent PGAM subfamily. In terms of assembly, homodimer.

It carries out the reaction (2R)-2-phosphoglycerate = (2R)-3-phosphoglycerate. Its pathway is carbohydrate degradation; glycolysis; pyruvate from D-glyceraldehyde 3-phosphate: step 3/5. Catalyzes the interconversion of 2-phosphoglycerate and 3-phosphoglycerate. The protein is 2,3-bisphosphoglycerate-dependent phosphoglycerate mutase of Chelativorans sp. (strain BNC1).